Here is an 827-residue protein sequence, read N- to C-terminus: Periplasmic nitrate reductase (827 aa).

The tat-type signal signal peptide spans 1-33 (MNLSRRDFMKANAAMAAATAAGLTIPVKNVVAA). The 4Fe-4S Mo/W bis-MGD-type domain occupies 37-93 (IKWDKGVCRFCGTGCAVLVGTKDGRVVASQGDPDAEVNRGLNCIKGYFLPKIMYGKD). [4Fe-4S] cluster-binding residues include cysteine 44, cysteine 47, cysteine 51, and cysteine 79. Residues lysine 81, glutamine 148, asparagine 173, cysteine 177, 210 to 217 (WGSNMAEM), 241 to 245 (STYEH), 260 to 262 (QTD), methionine 370, glutamine 374, asparagine 480, 506 to 507 (SD), lysine 529, aspartate 556, and 716 to 725 (TGRVLEHWHT) contribute to the Mo-bis(molybdopterin guanine dinucleotide) site. A substrate-binding site is contributed by phenylalanine 792. Mo-bis(molybdopterin guanine dinucleotide)-binding residues include asparagine 800 and lysine 817.

This sequence belongs to the prokaryotic molybdopterin-containing oxidoreductase family. NasA/NapA/NarB subfamily. As to quaternary structure, component of the periplasmic nitrate reductase NapAB complex composed of NapA and NapB. [4Fe-4S] cluster is required as a cofactor. Requires Mo-bis(molybdopterin guanine dinucleotide) as cofactor. Predicted to be exported by the Tat system. The position of the signal peptide cleavage has not been experimentally proven.

The protein localises to the periplasm. It carries out the reaction 2 Fe(II)-[cytochrome] + nitrate + 2 H(+) = 2 Fe(III)-[cytochrome] + nitrite + H2O. In terms of biological role, catalytic subunit of the periplasmic nitrate reductase complex NapAB. Receives electrons from NapB and catalyzes the reduction of nitrate to nitrite. This is Periplasmic nitrate reductase from Haemophilus influenzae (strain PittEE).